Reading from the N-terminus, the 821-residue chain is Calpain-3 (821 aa).

Residues 7–37 form a disordered region; sequence ASVAPRTAAEPRSPGPVPHPAQSKATEAGGG. A Calpain catalytic domain is found at 74 to 417; it reads LYVDPEFPPD…FTKLEICNLT (344 aa). Active-site residues include cysteine 129, histidine 334, and asparagine 358. A domain III region spans residues 418-586; that stretch reads ADALQSDKLQ…KRNLSEEVEN (169 aa). Residues 587–649 form a linker region; that stretch reads TISVDRPVKK…QPGSSDQESE (63 aa). A disordered region spans residues 609 to 652; that stretch reads ANSNKELGVDQESEEGKGKTSPDKQKQSPQPQPGSSDQESEEQQ. The span at 622-634 shows a compositional bias: basic and acidic residues; the sequence is EEGKGKTSPDKQK. The segment covering 635 to 645 has biased composition (low complexity); the sequence is QSPQPQPGSSD. 4 EF-hand domains span residues 649–683, 692–725, 722–757, and 787–821; these read EEQQQFRNIFKQIAGDDMEICADELKKVLNTVVNK, FTLESCRSMIALMDTDGSGKLNLQEFHHLWNKIK, NKIKAWQKIFKHYDTDQSGTINSYEMRNAVNDAGFH, and VRLEGMFRAFHAFDKDGDGIIKLNVLEWLQLTMYA. The interval 650-821 is domain IV; the sequence is EQQQFRNIFK…LEWLQLTMYA (172 aa). Ca(2+) contacts are provided by alanine 662, aspartate 665, glutamate 667, glutamate 672, aspartate 705, aspartate 707, serine 709, lysine 711, glutamate 716, aspartate 735, aspartate 737, serine 739, threonine 741, glutamate 746, aspartate 800, aspartate 802, aspartate 804, and isoleucine 806.

The protein belongs to the peptidase C2 family. Homodimer; via EF-hand domain 4. Interacts with TTN/titin. Interacts with CMYA5; this interaction, which results in CMYA5 proteolysis, may protect CAPN3 from autolysis. Interacts with SIMC1. Interacts with UTP25; the interaction is required for CAPN3 translocation to the nucleolus. As to expression, isoform I is skeletal muscle specific.

It localises to the cytoplasm. It is found in the nucleus. Its subcellular location is the nucleolus. It carries out the reaction Broad endopeptidase activity.. Activated by micromolar concentrations of calcium and inhibited by calpastatin. Functionally, calcium-regulated non-lysosomal thiol-protease. Proteolytically cleaves CTBP1 at 'His-409'. Mediates, with UTP25, the proteasome-independent degradation of p53/TP53. This Homo sapiens (Human) protein is Calpain-3.